Here is a 118-residue protein sequence, read N- to C-terminus: NADH-ubiquinone oxidoreductase chain 3 (118 aa).

2 helical membrane passes run 7–27 (ICIYLVISPLVSLIPLGLPFL) and 87–107 (IDPFGSWSMMAFLLILTIGSL).

This sequence belongs to the complex I subunit 3 family.

The protein localises to the mitochondrion membrane. It carries out the reaction a ubiquinone + NADH + 5 H(+)(in) = a ubiquinol + NAD(+) + 4 H(+)(out). Its function is as follows. Core subunit of the mitochondrial membrane respiratory chain NADH dehydrogenase (Complex I) that is believed to belong to the minimal assembly required for catalysis. Complex I functions in the transfer of electrons from NADH to the respiratory chain. The immediate electron acceptor for the enzyme is believed to be ubiquinone. The chain is NADH-ubiquinone oxidoreductase chain 3 (ND3) from Solanum tuberosum (Potato).